Consider the following 460-residue polypeptide: Bifunctional protein GlmU (460 aa).

The interval methionine 1 to arginine 235 is pyrophosphorylase. UDP-N-acetyl-alpha-D-glucosamine contacts are provided by residues leucine 9–glycine 12, lysine 23, glutamine 76, and glycine 81–threonine 82. Aspartate 109 is a Mg(2+) binding site. UDP-N-acetyl-alpha-D-glucosamine-binding residues include glycine 146, glutamate 161, asparagine 176, and asparagine 233. Residue asparagine 233 participates in Mg(2+) binding. The tract at residues valine 236–aspartate 256 is linker. Positions glycine 257–arginine 460 are N-acetyltransferase. The UDP-N-acetyl-alpha-D-glucosamine site is built by arginine 338 and lysine 356. The active-site Proton acceptor is the histidine 368. UDP-N-acetyl-alpha-D-glucosamine is bound by residues tyrosine 371 and asparagine 382. Acetyl-CoA is bound by residues asparagine 391–tyrosine 392 and alanine 428.

In the N-terminal section; belongs to the N-acetylglucosamine-1-phosphate uridyltransferase family. The protein in the C-terminal section; belongs to the transferase hexapeptide repeat family. Homotrimer. Requires Mg(2+) as cofactor.

Its subcellular location is the cytoplasm. It catalyses the reaction alpha-D-glucosamine 1-phosphate + acetyl-CoA = N-acetyl-alpha-D-glucosamine 1-phosphate + CoA + H(+). It carries out the reaction N-acetyl-alpha-D-glucosamine 1-phosphate + UTP + H(+) = UDP-N-acetyl-alpha-D-glucosamine + diphosphate. The protein operates within nucleotide-sugar biosynthesis; UDP-N-acetyl-alpha-D-glucosamine biosynthesis; N-acetyl-alpha-D-glucosamine 1-phosphate from alpha-D-glucosamine 6-phosphate (route II): step 2/2. Its pathway is nucleotide-sugar biosynthesis; UDP-N-acetyl-alpha-D-glucosamine biosynthesis; UDP-N-acetyl-alpha-D-glucosamine from N-acetyl-alpha-D-glucosamine 1-phosphate: step 1/1. It participates in bacterial outer membrane biogenesis; LPS lipid A biosynthesis. Functionally, catalyzes the last two sequential reactions in the de novo biosynthetic pathway for UDP-N-acetylglucosamine (UDP-GlcNAc). The C-terminal domain catalyzes the transfer of acetyl group from acetyl coenzyme A to glucosamine-1-phosphate (GlcN-1-P) to produce N-acetylglucosamine-1-phosphate (GlcNAc-1-P), which is converted into UDP-GlcNAc by the transfer of uridine 5-monophosphate (from uridine 5-triphosphate), a reaction catalyzed by the N-terminal domain. In Bifidobacterium longum (strain DJO10A), this protein is Bifunctional protein GlmU.